We begin with the raw amino-acid sequence, 272 residues long: tRNA pseudouridine synthase B (272 aa).

D38 (nucleophile) is an active-site residue.

Belongs to the pseudouridine synthase TruB family. Type 1 subfamily.

The enzyme catalyses uridine(55) in tRNA = pseudouridine(55) in tRNA. In terms of biological role, responsible for synthesis of pseudouridine from uracil-55 in the psi GC loop of transfer RNAs. In Campylobacter jejuni (strain RM1221), this protein is tRNA pseudouridine synthase B.